The following is a 102-amino-acid chain: Urease subunit beta (102 aa).

It belongs to the urease beta subunit family. In terms of assembly, heterotrimer of UreA (gamma), UreB (beta) and UreC (alpha) subunits. Three heterotrimers associate to form the active enzyme.

The protein localises to the cytoplasm. It catalyses the reaction urea + 2 H2O + H(+) = hydrogencarbonate + 2 NH4(+). It participates in nitrogen metabolism; urea degradation; CO(2) and NH(3) from urea (urease route): step 1/1. The sequence is that of Urease subunit beta from Trichodesmium erythraeum (strain IMS101).